We begin with the raw amino-acid sequence, 276 residues long: RRP15-like protein (276 aa).

Disordered stretches follow at residues 1-132 (MALL…QLRV) and 201-276 (KRAK…DGEE). Composition is skewed to basic and acidic residues over residues 75–95 (FQKD…KADV) and 226–245 (KGSS…DFMT). Residues 254 to 276 (EEDDDEEGHNDEADDSDYDDGEE) are compositionally biased toward acidic residues. Phosphoserine is present on Ser269. A Phosphotyrosine modification is found at Tyr271.

It belongs to the RRP15 family.

In Drosophila melanogaster (Fruit fly), this protein is RRP15-like protein.